The following is a 405-amino-acid chain: CMP-sialic acid transporter 3 (405 aa).

Topologically, residues 1-39 are cytoplasmic; the sequence is MKNGIAECPACHSKLVSPGSKTISRAYDDHKIRVSSKQR. The chain crosses the membrane as a helical span at residues 40 to 60; sequence VLNVLLVVGDCMLVGLQPVLV. The Lumenal segment spans residues 61-73; that stretch reads YMSKVDGKFNFSP. The chain crosses the membrane as a helical span at residues 74 to 94; that stretch reads ISVNFLTEIAKVIFAIVMLLI. Over 95–142 the chain is Cytoplasmic; sequence QARHQKVGEKPLLSVSTFVQAARNNVLLAVPALLYAINNYLKFTMQLY. Residues 143–163 traverse the membrane as a helical segment; that stretch reads FNPATVKMLSNLKVLVIAVLL. Residues 164–170 are Lumenal-facing; it reads KMVMKRR. The helical transmembrane segment at 171–191 threads the bilayer; that stretch reads FSIIQWEALALLLIGISVNQL. Residues 192 to 199 are Cytoplasmic-facing; the sequence is RSLPEGAT. A helical transmembrane segment spans residues 200 to 220; that stretch reads AIGIPLATGAYVCTVIFVTVP. Residues 221-243 are Lumenal-facing; it reads SMASVFNEYALKSQYDTSIYLQN. The helical transmembrane segment at 244-264 threads the bilayer; that stretch reads LFLYGYGAIFNFLGILGTVIY. At 265–280 the chain is on the cytoplasmic side; that stretch reads KGPGSFDILQGHSRAT. A helical membrane pass occupies residues 281–301; the sequence is MFLILNNAAQGILSSFFFKYA. Topologically, residues 302–321 are lumenal; it reads DTILKKYSSTVATIFTGIAS. The chain crosses the membrane as a helical span at residues 322–342; that stretch reads AALFGHVITMNFLLGISIVFI. At 343 to 405 the chain is on the cytoplasmic side; that stretch reads SMHQFFSPLA…SDDRTPLLPR (63 aa). Residues 385 to 405 form a disordered region; it reads GANEEASHRGESDDRTPLLPR. A compositionally biased stretch (basic and acidic residues) spans 389 to 405; sequence EASHRGESDDRTPLLPR.

Belongs to the nucleotide-sugar transporter family. CMP-Sialate:CMP antiporter (TC 2.A.7.12) subfamily.

It localises to the golgi apparatus membrane. Its function is as follows. Sugar transporter involved in the transport of CMP-sialic acid from the cytoplasm into the Golgi. This is CMP-sialic acid transporter 3 (UTR6) from Arabidopsis thaliana (Mouse-ear cress).